Reading from the N-terminus, the 482-residue chain is Peptide chain release factor PrfB2, chloroplastic (482 aa).

The transit peptide at 1–21 (MLSLIIRRSRSRFIIHGIKIS) directs the protein to the chloroplast.

It belongs to the prokaryotic/mitochondrial release factor family.

The protein localises to the plastid. It is found in the chloroplast stroma. Directs the termination of translation in response to the peptide chain termination codon UGA. Required for the proper translation, stability and normal processing of UGA-containing polycistronic transcripts in chloroplasts. This is Peptide chain release factor PrfB2, chloroplastic from Arabidopsis thaliana (Mouse-ear cress).